A 404-amino-acid polypeptide reads, in one-letter code: MHC class I-like protein MILL1 (404 aa).

Positions 1–30 are cleaved as a signal peptide; it reads MMLSRDLRAEAAVRLWIMFLLLEDLLGACA. Residues 59–150 form an alpha-1 region; the sequence is EVAGPHTLRY…VTGQKGQDKG (92 aa). 3 N-linked (GlcNAc...) asparagine glycosylation sites follow: asparagine 98, asparagine 102, and asparagine 165. The segment at 151–242 is alpha-2; the sequence is LHILQATLGC…SLRSEPLDTG (92 aa). 2 disulfides stabilise this stretch: cysteine 160–cysteine 223 and cysteine 262–cysteine 322. The Ig-like C1-type domain maps to 224–338; that stretch reads PAQLQRHLAS…GNIEKRAVIV (115 aa). The interval 243–342 is alpha-3; sequence SPMVIVTFRN…KRAVIVNTVS (100 aa). Asparagine 323 carries an N-linked (GlcNAc...) asparagine glycan. The connecting peptide stretch occupies residues 343-373; it reads GEKTRQPSTSGVGGRVKKSLWTTMTTAFMVT. A lipid anchor (GPI-anchor amidated serine) is attached at serine 374. Positions 375–404 are cleaved as a propeptide — removed in mature form; the sequence is WTRKTGGDSTLLLLWWLLFFSTVLAVLTLV.

Belongs to the MHC class I family. Heterodimer with B2M. In terms of tissue distribution, detected in skin, esophagus, tongue, skin, muscle, uterus, ovary, testis and epididymis.

Its subcellular location is the cell membrane. This chain is MHC class I-like protein MILL1, found in Rattus norvegicus (Rat).